We begin with the raw amino-acid sequence, 65 residues long: Large ribosomal subunit protein bL35 (65 aa).

Residues 1-16 (MPKQKTHRASAKRFKR) show a composition bias toward basic residues. The interval 1–20 (MPKQKTHRASAKRFKRTGSG) is disordered.

This sequence belongs to the bacterial ribosomal protein bL35 family.

This Streptococcus pyogenes serotype M1 protein is Large ribosomal subunit protein bL35.